The following is a 146-amino-acid chain: Phospholipase A2 OS2 (146 aa).

An N-terminal signal peptide occupies residues 1–27 (MHPAHLLVLLAVCVSLLGASDIPPLPL). 7 cysteine pairs are disulfide-bonded: C38-C99, C54-C145, C56-C72, C71-C126, C78-C119, C88-C112, and C106-C117. Residues Y55, G57, and G59 each coordinate Ca(2+). H75 is an active-site residue. D76 is a binding site for Ca(2+). D120 is a catalytic residue.

It belongs to the phospholipase A2 family. Group I subfamily. D49 sub-subfamily. As to quaternary structure, monomer. Requires Ca(2+) as cofactor. In terms of tissue distribution, expressed by the venom gland.

The protein localises to the secreted. The enzyme catalyses a 1,2-diacyl-sn-glycero-3-phosphocholine + H2O = a 1-acyl-sn-glycero-3-phosphocholine + a fatty acid + H(+). In terms of biological role, snake venom phospholipase A2 (PLA2) that shows high presynaptic neurotoxicity in vertebrata that is independent of catalytic activity, as well as local myotoxicity when intramuscularly injected into mice. Blocks acetylcholine release in Aplysia neurons, and potentiates pro-inflammatory cellular signaling. Potentiates glutamate excitoxicity when coinjected into brain of rats. May act by binding in a calcium-dependent fashion and with high affinity to a neuronal-type (N-type) PLA2 receptor, and with very high affinity to a muscle-type (M-type) PLA2 receptor. In vitro, shows a high-specific activity on E.coli membranes and is more efficient on the anionic phospholipid POPG than on the anionic phospholipid POPS or the zwitterionic phospholipid POPC. Exerts catalytically-independent anti-HIV (IC(50) is 35 nM) activity and catalytically-dependent antimalarial activity (IC(50) is 3.1 nM when tested on P.falciparum grown in serum that contains lipoproteins). PLA2 catalyzes the calcium-dependent hydrolysis of the 2-acyl groups in 3-sn-phosphoglycerides. In Oxyuranus scutellatus scutellatus (Australian taipan), this protein is Phospholipase A2 OS2.